Consider the following 234-residue polypeptide: Thymidylate kinase (234 aa).

Residue 11–18 (GLEGSGKT) participates in ATP binding.

This sequence belongs to the thymidylate kinase family.

It carries out the reaction dTMP + ATP = dTDP + ADP. In terms of biological role, phosphorylation of dTMP to form dTDP in both de novo and salvage pathways of dTTP synthesis. The chain is Thymidylate kinase from Wigglesworthia glossinidia brevipalpis.